Reading from the N-terminus, the 394-residue chain is Purine ribonucleoside efflux pump NepI (394 aa).

Over 1-21 (MSEFIAENRGADAITRPNWSA) the chain is Cytoplasmic. A helical membrane pass occupies residues 22-42 (VFSVAFCVACLIIVEFLPVSL). Residues 43–54 (LTPMAQDLGISE) are Periplasmic-facing. Residues 55 to 75 (GVAGQSVTVTAFVAMFASLFI) form a helical membrane-spanning segment. Residues 76–85 (TQTIQATDRR) lie on the Cytoplasmic side of the membrane. Residues 86 to 106 (YVVILFAVLLTISCLLVSFAN) form a helical membrane-spanning segment. Residue Ser-107 is a topological domain, periplasmic. Residues 108 to 128 (FSLLLIGRACLGLALGGFWAM) traverse the membrane as a helical segment. The Cytoplasmic portion of the chain corresponds to 129-147 (SASLTMRLVPPRTVPKALS). A helical transmembrane segment spans residues 148–168 (VIFGAVSIALVIAAPLGSFLG). At 169–175 (ELIGWRN) the chain is on the periplasmic side. Residues 176–196 (VFNAAAVMGVLCIFWIIKSLP) form a helical membrane-spanning segment. Residues 197–215 (SLPGKPSHQKQNTFRLLQR) lie on the Cytoplasmic side of the membrane. Residues 216–236 (PGVMAGMIAIFMSFAGQFAFF) traverse the membrane as a helical segment. The Periplasmic segment spans residues 237–255 (TYIRPVYMNLAGFGVDGLT). Residues 256–276 (LVLLSFGIASFIGTSLSSFIL) traverse the membrane as a helical segment. At 277–281 (KRSVK) the chain is on the cytoplasmic side. The chain crosses the membrane as a helical span at residues 282–302 (LALAGAPLILAVSALVLTLCG). The Periplasmic segment spans residues 303–305 (SDK). Residues 306–326 (IVATGVAIIWGLTFALVPVGW) traverse the membrane as a helical segment. Over 327–343 (STWSTRSLADQAEKAGS) the chain is Cytoplasmic. A helical transmembrane segment spans residues 344 to 364 (IQVAVIQLANTCGAAIGGYAL). The Periplasmic segment spans residues 365–366 (DN). The helical transmembrane segment at 367–387 (IGLTSPLMLSGTLMLLTALLV) threads the bilayer. At 388–394 (TAKVKMK) the chain is on the cytoplasmic side.

It belongs to the major facilitator superfamily. DHA1 family. NepI (TC 2.A.1.2.26) subfamily.

The protein resides in the cell inner membrane. The enzyme catalyses inosine(in) + H(+)(out) = inosine(out) + H(+)(in). The catalysed reaction is guanosine(in) + H(+)(out) = guanosine(out) + H(+)(in). In terms of biological role, involved in the efflux of purine ribonucleosides, such as inosine and guanosine. The sequence is that of Purine ribonucleoside efflux pump NepI from Shigella dysenteriae serotype 1 (strain Sd197).